The chain runs to 520 residues: Probable methylmalonate-semialdehyde/malonate-semialdehyde dehydrogenase [acylating], mitochondrial (520 aa).

NAD(+) contacts are provided by A169, F171, K195, E198, R199, and S248. The Nucleophile role is filled by C303. E403 lines the NAD(+) pocket.

Belongs to the aldehyde dehydrogenase family. Homotetramer.

The protein localises to the mitochondrion. The catalysed reaction is 2-methyl-3-oxopropanoate + NAD(+) + CoA + H2O = propanoyl-CoA + hydrogencarbonate + NADH + H(+). The enzyme catalyses 3-oxopropanoate + NAD(+) + CoA + H2O = hydrogencarbonate + acetyl-CoA + NADH + H(+). Probable malonate and methylmalonate semialdehyde dehydrogenase involved in the catabolism of valine, thymine, and compounds catabolized by way of beta-alanine, including uracil and cytidine. In Drosophila melanogaster (Fruit fly), this protein is Probable methylmalonate-semialdehyde/malonate-semialdehyde dehydrogenase [acylating], mitochondrial.